The following is a 188-amino-acid chain: Peptidyl-tRNA hydrolase (188 aa).

Tyr14 lines the tRNA pocket. Residue His19 is the Proton acceptor of the active site. Positions 64, 66, and 113 each coordinate tRNA.

It belongs to the PTH family. Monomer.

It is found in the cytoplasm. The catalysed reaction is an N-acyl-L-alpha-aminoacyl-tRNA + H2O = an N-acyl-L-amino acid + a tRNA + H(+). In terms of biological role, hydrolyzes ribosome-free peptidyl-tRNAs (with 1 or more amino acids incorporated), which drop off the ribosome during protein synthesis, or as a result of ribosome stalling. Functionally, catalyzes the release of premature peptidyl moieties from peptidyl-tRNA molecules trapped in stalled 50S ribosomal subunits, and thus maintains levels of free tRNAs and 50S ribosomes. This Chloroflexus aggregans (strain MD-66 / DSM 9485) protein is Peptidyl-tRNA hydrolase.